The sequence spans 195 residues: NADH-ubiquinone oxidoreductase subunit 9 (195 aa).

Belongs to the complex I 30 kDa subunit family. Complex I is composed of about 30 different subunits.

Its subcellular location is the mitochondrion inner membrane. It catalyses the reaction a ubiquinone + NADH + 5 H(+)(in) = a ubiquinol + NAD(+) + 4 H(+)(out). Core subunit of the mitochondrial membrane respiratory chain NADH dehydrogenase (Complex I) that is believed to belong to the minimal assembly required for catalysis. Complex I functions in the transfer of electrons from NADH to the respiratory chain. The immediate electron acceptor for the enzyme is believed to be ubiquinone. The chain is NADH-ubiquinone oxidoreductase subunit 9 (NAD9) from Acanthamoeba castellanii (Amoeba).